A 720-amino-acid polypeptide reads, in one-letter code: Protein unc-112 (720 aa).

Disordered regions lie at residues Asp145–Gly170 and Met210–Arg236. The region spanning Trp288–Phe614 is the FERM domain. The PH domain occupies Val402–Arg507.

It belongs to the kindlin family. Interacts with pat-4/ILK. Probably forms a complex with pat-4 and pat-6. Component of an integrin containing attachment complex, composed of at least pat-2, pat-3, pat-4, pat-6, unc-52, unc-97 and unc-112. In terms of tissue distribution, mainly expressed in muscle cells in both embryos and adults.

The protein localises to the cell membrane. The protein resides in the cytoplasm. It localises to the myofibril. Its subcellular location is the sarcomere. It is found in the m line. Functionally, component of an integrin containing attachment complex, which is required for muscle development and maintenance. Probable regulator of cell-extracellular matrix adhesion. Required during initial muscle assembly to form dense bodies and M-lines. The polypeptide is Protein unc-112 (Caenorhabditis elegans).